The chain runs to 267 residues: 3-methyl-2-oxobutanoate hydroxymethyltransferase (267 aa).

2 residues coordinate Mg(2+): aspartate 46 and aspartate 85. Residues 46–47, aspartate 85, and lysine 115 contribute to the 3-methyl-2-oxobutanoate site; that span reads DS. Glutamate 117 serves as a coordination point for Mg(2+). The active-site Proton acceptor is the glutamate 184.

This sequence belongs to the PanB family. As to quaternary structure, homodecamer; pentamer of dimers. It depends on Mg(2+) as a cofactor.

It localises to the cytoplasm. The catalysed reaction is 3-methyl-2-oxobutanoate + (6R)-5,10-methylene-5,6,7,8-tetrahydrofolate + H2O = 2-dehydropantoate + (6S)-5,6,7,8-tetrahydrofolate. The protein operates within cofactor biosynthesis; (R)-pantothenate biosynthesis; (R)-pantoate from 3-methyl-2-oxobutanoate: step 1/2. Catalyzes the reversible reaction in which hydroxymethyl group from 5,10-methylenetetrahydrofolate is transferred onto alpha-ketoisovalerate to form ketopantoate. The polypeptide is 3-methyl-2-oxobutanoate hydroxymethyltransferase (Geotalea uraniireducens (strain Rf4) (Geobacter uraniireducens)).